Consider the following 514-residue polypeptide: Type-2 serine--tRNA ligase (514 aa).

Alanine 313 provides a ligand contact to L-serine. Cysteine 315 lines the Zn(2+) pocket. Arginine 344 serves as a coordination point for L-serine. ATP contacts are provided by residues 344–346 (RWE) and 355–356 (RV). Position 361–363 (361–363 (RGE)) interacts with L-serine. Residues glutamate 363 and cysteine 470 each coordinate Zn(2+). Residue arginine 477 participates in ATP binding.

Belongs to the class-II aminoacyl-tRNA synthetase family. Type-2 seryl-tRNA synthetase subfamily. In terms of assembly, homodimer. Requires Zn(2+) as cofactor.

Its subcellular location is the cytoplasm. The catalysed reaction is tRNA(Ser) + L-serine + ATP = L-seryl-tRNA(Ser) + AMP + diphosphate + H(+). It carries out the reaction tRNA(Sec) + L-serine + ATP = L-seryl-tRNA(Sec) + AMP + diphosphate + H(+). The protein operates within aminoacyl-tRNA biosynthesis; selenocysteinyl-tRNA(Sec) biosynthesis; L-seryl-tRNA(Sec) from L-serine and tRNA(Sec): step 1/1. Catalyzes the attachment of serine to tRNA(Ser). Is also able to aminoacylate tRNA(Sec) with serine, to form the misacylated tRNA L-seryl-tRNA(Sec), which will be further converted into selenocysteinyl-tRNA(Sec). The protein is Type-2 serine--tRNA ligase (serS) of Methanococcus maripaludis (strain DSM 14266 / JCM 13030 / NBRC 101832 / S2 / LL).